The sequence spans 189 residues: uncharacterized protein (189 aa).

Residues 1–20 (MKFSTVGFLFSTILFKSAFA) form the signal peptide. The region spanning 74–109 (KKNEVLVDVLKKCDPSGNRRITLDEFLAFRKNGGEL) is the EF-hand domain. Positions 87, 89, 91, 93, and 98 each coordinate Ca(2+).

It is found in the endoplasmic reticulum lumen. The protein localises to the golgi apparatus lumen. This is an uncharacterized protein from Schizosaccharomyces pombe (strain 972 / ATCC 24843) (Fission yeast).